A 631-amino-acid chain; its full sequence is ESX-3 secretion system protein EccA3 (631 aa).

Position 385-392 (385-392 (GPPGTGKT)) interacts with ATP.

It belongs to the CbxX/CfxQ family. In terms of assembly, part of the ESX-3 / type VII secretion system (T7SS), which is composed of cytosolic and membrane components.

The protein localises to the cytoplasm. Part of the ESX-3 specialized secretion system, which is important for iron and zinc uptake or homeostasis. EccA3 exhibits ATPase activity and may provide energy for the export of ESX-3 substrates. This is ESX-3 secretion system protein EccA3 from Mycobacterium tuberculosis (strain CDC 1551 / Oshkosh).